We begin with the raw amino-acid sequence, 40 residues long: Sarcotoxin-1D (40 aa).

This sequence belongs to the cecropin family.

The protein resides in the secreted. Its function is as follows. Sarcotoxins, which are potent bactericidal proteins, are produced in response to injury. They are cytotoxic to both Gram-positive and Gram-negative bacteria. In Sarcophaga peregrina (Flesh fly), this protein is Sarcotoxin-1D.